A 579-amino-acid chain; its full sequence is MRNAQKPSGMPVHRYMPFQDQITVELPDRTWPDKVITKAPRWCAVDLRDGNQALIDPMSPARKMKMFDLLVRMGYKEIEVGFPSASQTDFDFVRQLIEGNHIPDDVTIQVLTQAREHLIERTYESLVGAKQAIVHLYNSTSVLQRRVVFNQDEDGILDIALQGARLCKKYEETLADTHITYEYSPESFTGTELEYAVRVCNAVADVFEASADSQVIINLPATVEMATPNVYADSIEWMSRHLHPREGIILSLHPHNDRGTGVAAAELGYLAGADRIEGCLFGNGERTGNVDLVTLGLNMFVQGIDPMIDFSDIDDVRRTVEYCNQLPVAERSPYGGDLVFTAFSGSHQDAIKKGFEALEKDAAAAGKDVADYTWQVPYLPVDPKDLGRSYEAVIRVNSQSGKGGVAYLLKNEHSLDLPRRAQIEFSGVIQKRTDTVGGEVSGAQLWQIFQDEYLPSSKEDGQWGRYSLGSFSTETDDDGAMTLHATVTVDGVQVRRTGSGNGPIAALLSILGQDGVDVRVLDYSEHALSEGGNARAAAYVECAVGERVLWGVGIDSNTTTSSLKAVISAVNRAIRDAQA.

Residues 40–314 (PRWCAVDLRD…DPMIDFSDID (275 aa)) form the Pyruvate carboxyltransferase domain. 4 residues coordinate Mg(2+): Asp-49, His-253, His-255, and Asn-289. The tract at residues 456-579 (SSKEDGQWGR…VNRAIRDAQA (124 aa)) is regulatory domain.

It belongs to the alpha-IPM synthase/homocitrate synthase family. LeuA type 2 subfamily. As to quaternary structure, homodimer. Mg(2+) is required as a cofactor.

It localises to the cytoplasm. It carries out the reaction 3-methyl-2-oxobutanoate + acetyl-CoA + H2O = (2S)-2-isopropylmalate + CoA + H(+). It participates in amino-acid biosynthesis; L-leucine biosynthesis; L-leucine from 3-methyl-2-oxobutanoate: step 1/4. Functionally, catalyzes the condensation of the acetyl group of acetyl-CoA with 3-methyl-2-oxobutanoate (2-ketoisovalerate) to form 3-carboxy-3-hydroxy-4-methylpentanoate (2-isopropylmalate). This chain is 2-isopropylmalate synthase, found in Arthrobacter sp. (strain FB24).